The chain runs to 1684 residues: Latrophilin Cirl (1684 aa).

The Extracellular portion of the chain corresponds to 1-765 (MASNNYIQIM…LFTMFDGNMR (765 aa)). The 90-residue stretch at 21-110 (ACEGKKLTIE…KYLEAHYQCV (90 aa)) folds into the SUEL-type lectin domain. Residues N138, N251, N297, and N336 are each glycosylated (N-linked (GlcNAc...) asparagine). Residues 181–300 (PPATHATPPG…GPSVSSNGSA (120 aa)) are disordered. 2 stretches are compositionally biased toward polar residues: residues 250-260 (SNATAPSNTRI) and 278-300 (KSSPNRTPGTAASGPSVSSNGSA). The interval 370-391 (SFDEDDEEMAGTSTTTPMSTSS) is disordered. Low complexity predominate over residues 381 to 391 (TSTTTPMSTSS). 4 N-linked (GlcNAc...) asparagine glycosylation sites follow: N396, N653, N701, and N728. One can recognise a GAIN-B domain in the interval 559–752 (RSVVQKVKNI…AILMDVVDEH (194 aa)). 2 disulfides stabilise this stretch: C707/C734 and C722/C736. Residues 707 to 752 (CVFWNYIDHAWSANGCSLESTNRTHSVCSCNHLTNFAILMDVVDEH) form a GPS region. The chain crosses the membrane as a helical span at residues 766–786 (IFIYISIAICVVFIVIALLTL). The Cytoplasmic segment spans residues 787-799 (KLFNGVFVKSART). A helical transmembrane segment spans residues 800–820 (SIYINIYICLLAIELLFLLGI). Residues 821–826 (EQTETS) lie on the Extracellular side of the membrane. A helical membrane pass occupies residues 827–847 (IFCGFITVFLHCAILSGTSWF). Over 848 to 873 (CYEAFHSYSTLTSDELLLEVDQTPKV) the chain is Cytoplasmic. The chain crosses the membrane as a helical span at residues 874–894 (NCYYLLSYGLSLSVVAISLVI). Residues 895 to 918 (NPSTYTQNDYCVLMEANAVFYATF) are Extracellular-facing. Residues 919 to 939 (VAPVLIFFMAAIGYTFLSWII) traverse the membrane as a helical segment. The Cytoplasmic segment spans residues 940–966 (MCRKSRTGLKTKEHTRLATVRFDIRCS). A helical transmembrane segment spans residues 967–987 (FVFFLLLSAVWCSAYFYLRGA). Residues 988–994 (KMDEDVT) are Extracellular-facing. Residues 995–1015 (GIYGYNFICFNTLLGLYIFVF) traverse the membrane as a helical segment. Residues 1016 to 1684 (HCIQNEKIRR…VRCYLEPLAK (669 aa)) lie on the Cytoplasmic side of the membrane. Residues 1080–1100 (PLGTNDDAHDEQQQQQHMSAT) form a disordered region. 3 positions are modified to phosphoserine: S1156, S1247, and S1254. 4 disordered regions span residues 1228–1255 (KPNSQHGKKKRGGVGAIPASPSGSLHSR), 1270–1353 (KTKP…APPP), 1441–1520 (SRYG…LPPQ), and 1587–1669 (SMRG…SAML). The span at 1298–1314 (QQQQQLRQQRQQQQQQL) shows a compositional bias: low complexity. A phosphoserine mark is found at S1315 and S1316. Over residues 1328–1348 (LHLQHQQQQQQQRRAGGQQQL) the composition is skewed to low complexity. Residues 1455–1466 (RNQQQQQHSLAQ) are compositionally biased toward polar residues. Acidic residues-rich tracts occupy residues 1476–1489 (DEDDDEDEDDEETT) and 1499–1512 (CDEEEEDEESDMED). The span at 1631–1654 (QQLQKLSPQSTTSSSSHTSHSNPH) shows a compositional bias: low complexity.

This sequence belongs to the G-protein coupled receptor 2 family. LN-TM7 subfamily. In terms of assembly, forms a heterodimer, consisting of a large extracellular region non-covalently linked to a seven-transmembrane moiety. Proteolytically cleaved into 2 subunits, an extracellular subunit and a seven-transmembrane subunit.

It is found in the cell membrane. The protein is Latrophilin Cirl of Drosophila persimilis (Fruit fly).